Consider the following 541-residue polypeptide: Calcium/calmodulin-dependent protein kinase kinase (541 aa).

The disordered stretch occupies residues 83 to 106; sequence AVQEDDEAGPHSSNNLAATMSPNL. Over residues 93–106 the composition is skewed to polar residues; sequence HSSNNLAATMSPNL. The Protein kinase domain occupies 130–411; it reads YRLMEEIGQG…LHEVKVHTWV (282 aa). ATP-binding positions include 136-144 and lysine 159; that span reads IGQGSYGIV. The segment at 169–190 is RP domain; it reads NFACFRQPPPRRNKENAAPSVL. Aspartate 276 serves as the catalytic Proton acceptor. Residues 437 to 442 are autoinhibitory domain; the sequence is ENCVRV. The interval 440-465 is calmodulin-binding; the sequence is VRVIPRLDTLILVKAMGHRKRFGNPF. The interval 462 to 512 is disordered; it reads GNPFRNKLSAQSSIRDRRKSSSVKDPTYVPPPNSPPATSNNNLNSTKVDRP. The segment covering 497-507 has biased composition (low complexity); that stretch reads PATSNNNLNST.

It belongs to the protein kinase superfamily. Ser/Thr protein kinase family. Requires Mg(2+) as cofactor. As to expression, expressed in head and tail neurons and vulval muscles.

The protein resides in the cytoplasm. The enzyme catalyses L-seryl-[protein] + ATP = O-phospho-L-seryl-[protein] + ADP + H(+). The catalysed reaction is L-threonyl-[protein] + ATP = O-phospho-L-threonyl-[protein] + ADP + H(+). With respect to regulation, activated by Ca(2+)/calmodulin. Binding of calmodulin may relieve intrasteric autoinhibition. In terms of biological role, calcium/calmodulin-dependent protein kinase which phosphorylates cmk-1. Component of a calcium-triggered signaling cascade involved in CRE-mediated transcriptional activation, probably through cmk-1-mediated crh-1/CREB phosphorylation. Plays a role in salt-avoidance learning behavior via the phosphorylation of cmk-1. The protein is Calcium/calmodulin-dependent protein kinase kinase of Caenorhabditis elegans.